We begin with the raw amino-acid sequence, 482 residues long: O-methyltransferase tpcA (482 aa).

S-adenosyl-L-methionine contacts are provided by residues 293-294 (GG), D316, 348-349 (SF), and R364. H368 serves as the catalytic Proton acceptor.

This sequence belongs to the class I-like SAM-binding methyltransferase superfamily. Cation-independent O-methyltransferase family. In terms of tissue distribution, specifically expressed in conidia.

Its pathway is secondary metabolite biosynthesis. O-methyltransferase; part of the gene cluster that mediates the biosynthesis of trypacidin, a mycotoxin with antiprotozoal activity and that plays a role in the infection process. The pathway begins with the synthesis of atrochrysone thioester by the polyketide synthase (PKS) tpcC. The atrochrysone carboxyl ACP thioesterase tpcB then breaks the thioester bond and releases the atrochrysone carboxylic acid from tpcC. The decarboxylase tpcK converts atrochrysone carboxylic acid to atrochrysone which is further reduced into emodin anthrone. The next step is performed by the emodin anthrone oxygenase tpcL that catalyzes the oxidation of emodinanthrone to emodin. Emodin O-methyltransferase encoded by tpcA catalyzes methylation of the 8-hydroxy group of emodin to form questin. Ring cleavage of questin by questin oxidase tpcI leads to desmethylsulochrin via several intermediates including questin epoxide. Another methylation step catalyzed by tpcM leads to the formation of sulochrin which is further converted to monomethylsulfochrin by tpcH. Finally, the tpcJ catalyzes the conversion of monomethylsulfochrin to trypacidin. Trypacidin is toxic for human pulmonary and bronchial epithelial cells by initiating the intracellular formation of nitric oxide (NO) and hydrogen peroxide (H(2)O(2)), thus triggering host necrotic cell death. The trypacidin pathway is also able to produce endocrocin via a distinct route from the endocrocin Enc pathway. This is O-methyltransferase tpcA from Aspergillus fumigatus (strain ATCC MYA-4609 / CBS 101355 / FGSC A1100 / Af293) (Neosartorya fumigata).